Here is a 503-residue protein sequence, read N- to C-terminus: Na(+)-translocating NADH-quinone reductase subunit B (503 aa).

The next 5 helical transmembrane spans lie at 55 to 75 (MMLVVIALFPATFLAIWNSGV), 94 to 114 (ISGFRSYLSFIFNDIGVFSIL), 120 to 140 (IFLPLLIISYSVGGVCEVLFA), 161 to 181 (TLPPTIPYWMAALGIAFGVVV), and 186 to 206 (FGGTGMNILNPALSGRAFLFF). Thr-248 is modified (FMN phosphoryl threonine). 5 helical membrane passes run 361 to 381 (TSTFACLLGAIFLVVTGIASW), 387 to 407 (FGIGAFITAWLFKIFSILIVG), 417 to 437 (FFIPAYRQLFLGGLGFGLVFM), 452 to 472 (WIYGLFIGFMTIVIRLINPAY), and 475 to 495 (GVMLAILLGNVFAPLLDYFAV).

It belongs to the NqrB/RnfD family. As to quaternary structure, composed of six subunits; NqrA, NqrB, NqrC, NqrD, NqrE and NqrF. Requires FMN as cofactor.

Its subcellular location is the cell inner membrane. The catalysed reaction is a ubiquinone + n Na(+)(in) + NADH + H(+) = a ubiquinol + n Na(+)(out) + NAD(+). Its function is as follows. NQR complex catalyzes the reduction of ubiquinone-1 to ubiquinol by two successive reactions, coupled with the transport of Na(+) ions from the cytoplasm to the periplasm. NqrA to NqrE are probably involved in the second step, the conversion of ubisemiquinone to ubiquinol. This chain is Na(+)-translocating NADH-quinone reductase subunit B, found in Chlamydia caviae (strain ATCC VR-813 / DSM 19441 / 03DC25 / GPIC) (Chlamydophila caviae).